The chain runs to 520 residues: GMP synthase [glutamine-hydrolyzing] (520 aa).

Residues Arg-8 to Asp-202 enclose the Glutamine amidotransferase type-1 domain. Cys-86 functions as the Nucleophile in the catalytic mechanism. Active-site residues include His-177 and Glu-179. The 193-residue stretch at Trp-203–Arg-395 folds into the GMPS ATP-PPase domain. An ATP-binding site is contributed by Ser-230–Ser-236.

As to quaternary structure, homodimer.

The enzyme catalyses XMP + L-glutamine + ATP + H2O = GMP + L-glutamate + AMP + diphosphate + 2 H(+). Its pathway is purine metabolism; GMP biosynthesis; GMP from XMP (L-Gln route): step 1/1. Its function is as follows. Catalyzes the synthesis of GMP from XMP. The polypeptide is GMP synthase [glutamine-hydrolyzing] (Ruegeria sp. (strain TM1040) (Silicibacter sp.)).